The primary structure comprises 206 residues: Imidazoleglycerol-phosphate dehydratase (206 aa).

Belongs to the imidazoleglycerol-phosphate dehydratase family.

Its subcellular location is the cytoplasm. It carries out the reaction D-erythro-1-(imidazol-4-yl)glycerol 3-phosphate = 3-(imidazol-4-yl)-2-oxopropyl phosphate + H2O. It participates in amino-acid biosynthesis; L-histidine biosynthesis; L-histidine from 5-phospho-alpha-D-ribose 1-diphosphate: step 6/9. This Cutibacterium acnes (strain DSM 16379 / KPA171202) (Propionibacterium acnes) protein is Imidazoleglycerol-phosphate dehydratase.